The following is an 853-amino-acid chain: Transcription factor macR (853 aa).

The zn(2)-C6 fungal-type DNA-binding region spans 18–45 (CIVCRRRKVRCGREQPECANCVRMKENC). 4 disordered regions span residues 54–122 (ESTG…PYPT), 138–166 (ANAP…PTPS), 734–775 (ASDL…AGNK), and 833–853 (LGSQ…DFPG). Polar residues-rich tracts occupy residues 104-116 (PQVS…SPQR), 141-163 (PQIN…SLFP), and 738-752 (RATS…SSTT).

It localises to the nucleus. In terms of biological role, transcription factor that regulates the expression of the gene cluster that mediates the biosynthesis of macrophorins, isoprenoid epoxycyclohexenones containing cyclized drimane moieties. The protein is Transcription factor macR of Penicillium terrestre.